The chain runs to 193 residues: Epididymal-specific lipocalin-12 (193 aa).

The N-terminal stretch at 1–19 is a signal peptide; the sequence is MGPWWALWLILTLPQILES. A disulfide bridge links C88 with C193. 2 N-linked (GlcNAc...) asparagine glycosylation sites follow: N143 and N172.

This sequence belongs to the calycin superfamily. Lipocalin family. As to quaternary structure, monomer. In terms of tissue distribution, expressed in epididymis.

The protein localises to the secreted. Functionally, binds all-trans retinoic acid and may act as a retinoid carrier protein within the epididymis. May play a role in male fertility. In Mus musculus (Mouse), this protein is Epididymal-specific lipocalin-12 (Lcn12).